Consider the following 941-residue polypeptide: Gamma-aminobutyric acid type B receptor subunit 2 (941 aa).

Residues 1-41 form the signal peptide; it reads MASPRSSGQPGPPPPPPPPPARLLLLLLLPLLLPLAPGAWG. At 42-483 the chain is on the extracellular side; sequence WARGAPRPPP…LRKISLPLYS (442 aa). Asparagine 90 carries N-linked (GlcNAc...) asparagine glycosylation. Cystine bridges form between cysteine 108–cysteine 135, cysteine 237–cysteine 266, and cysteine 265–cysteine 302. N-linked (GlcNAc...) asparagine glycans are attached at residues asparagine 298, asparagine 389, asparagine 404, and asparagine 453. The helical transmembrane segment at 484–504 threads the bilayer; sequence ILSALTILGMIMASAFLFFNI. Topologically, residues 505 to 522 are cytoplasmic; that stretch reads KNRNQKLIKMSSPYMNNL. Residues 523 to 543 form a helical membrane-spanning segment; the sequence is IILGGMLSYASIFLFGLDGSF. Residues 544-551 lie on the Extracellular side of the membrane; it reads VSEKTFET. The chain crosses the membrane as a helical span at residues 552 to 572; the sequence is LCTVRTWILTVGYTTAFGAMF. Topologically, residues 573–597 are cytoplasmic; the sequence is AKTWRVHAIFKNVKMKKKIIKDQKL. Residues 598 to 618 traverse the membrane as a helical segment; it reads LVIVGGMLLIDLCILICWQAV. The Extracellular segment spans residues 619–654; sequence DPLRRTVEKYSMEPDPAGRDISIRPLLEHCENTHMT. Residues 655–675 form a helical membrane-spanning segment; that stretch reads IWLGIVYAYKGLLMLFGCFLA. The Cytoplasmic portion of the chain corresponds to 676–691; the sequence is WETRNVSIPALNDSKY. Residues 692–712 traverse the membrane as a helical segment; sequence IGMSVYNVGIMCIIGAAVSFL. Residues 713–720 lie on the Extracellular side of the membrane; the sequence is TRDQPNVQ. Residues 721-741 traverse the membrane as a helical segment; it reads FCIVALVIIFCSTITLCLVFV. Topologically, residues 742–941 are cytoplasmic; the sequence is PKLITLRTNP…PSFRVMVSGL (200 aa). The tract at residues 763–790 is disordered; that stretch reads TQNQKKEDSKTSTSVTSVNQASTSRLEG. The segment covering 773-787 has biased composition (polar residues); the sequence is TSTSVTSVNQASTSR. 2 positions are modified to phosphoserine: serine 776 and serine 779. The stretch at 781 to 819 forms a coiled coil; sequence NQASTSRLEGLQSENHRLRMKITELDKDLEEVTMQLQDT. At threonine 819 the chain carries Phosphothreonine. Residues serine 884, serine 893, serine 913, serine 916, serine 920, and serine 924 each carry the phosphoserine modification.

It belongs to the G-protein coupled receptor 3 family. GABA-B receptor subfamily. In terms of assembly, heterodimer of GABBR1 and GABBR2. Homodimers may form, but are inactive. Interacts (via C-terminus) with ATF4 (via leucine zipper domain). As to expression, highly expressed in brain, especially in cerebral cortex, thalamus, hippocampus, frontal, occipital and temporal lobe, occipital pole and cerebellum, followed by corpus callosum, caudate nucleus, spinal cord, amygdala and medulla. Weakly expressed in heart, testis and skeletal muscle.

The protein localises to the cell membrane. The protein resides in the postsynaptic cell membrane. Its function is as follows. Component of a heterodimeric G-protein coupled receptor for GABA, formed by GABBR1 and GABBR2. Within the heterodimeric GABA receptor, only GABBR1 seems to bind agonists, while GABBR2 mediates coupling to G proteins. Ligand binding causes a conformation change that triggers signaling via guanine nucleotide-binding proteins (G proteins) and modulates the activity of down-stream effectors, such as adenylate cyclase. Signaling inhibits adenylate cyclase, stimulates phospholipase A2, activates potassium channels, inactivates voltage-dependent calcium-channels and modulates inositol phospholipid hydrolysis. Plays a critical role in the fine-tuning of inhibitory synaptic transmission. Pre-synaptic GABA receptor inhibits neurotransmitter release by down-regulating high-voltage activated calcium channels, whereas postsynaptic GABA receptor decreases neuronal excitability by activating a prominent inwardly rectifying potassium (Kir) conductance that underlies the late inhibitory postsynaptic potentials. Not only implicated in synaptic inhibition but also in hippocampal long-term potentiation, slow wave sleep, muscle relaxation and antinociception. The chain is Gamma-aminobutyric acid type B receptor subunit 2 (GABBR2) from Homo sapiens (Human).